Consider the following 203-residue polypeptide: Small ribosomal subunit protein uS4 (203 aa).

In terms of domain architecture, S4 RNA-binding spans 93-153 (RRLDNVVYRL…EKSKNLQQVK (61 aa)).

It belongs to the universal ribosomal protein uS4 family. Part of the 30S ribosomal subunit. Contacts protein S5. The interaction surface between S4 and S5 is involved in control of translational fidelity.

Functionally, one of the primary rRNA binding proteins, it binds directly to 16S rRNA where it nucleates assembly of the body of the 30S subunit. Its function is as follows. With S5 and S12 plays an important role in translational accuracy. This is Small ribosomal subunit protein uS4 from Lactobacillus delbrueckii subsp. bulgaricus (strain ATCC 11842 / DSM 20081 / BCRC 10696 / JCM 1002 / NBRC 13953 / NCIMB 11778 / NCTC 12712 / WDCM 00102 / Lb 14).